A 345-amino-acid polypeptide reads, in one-letter code: Biotin synthase (345 aa).

Positions 59-286 (NEVQLSTLLS…TTMVRLSAGR (228 aa)) constitute a Radical SAM core domain. Residues cysteine 74, cysteine 78, and cysteine 81 each contribute to the [4Fe-4S] cluster site. [2Fe-2S] cluster-binding residues include cysteine 118, cysteine 149, cysteine 209, and arginine 281.

It belongs to the radical SAM superfamily. Biotin synthase family. In terms of assembly, homodimer. The cofactor is [4Fe-4S] cluster. Requires [2Fe-2S] cluster as cofactor.

The enzyme catalyses (4R,5S)-dethiobiotin + (sulfur carrier)-SH + 2 reduced [2Fe-2S]-[ferredoxin] + 2 S-adenosyl-L-methionine = (sulfur carrier)-H + biotin + 2 5'-deoxyadenosine + 2 L-methionine + 2 oxidized [2Fe-2S]-[ferredoxin]. The protein operates within cofactor biosynthesis; biotin biosynthesis; biotin from 7,8-diaminononanoate: step 2/2. Catalyzes the conversion of dethiobiotin (DTB) to biotin by the insertion of a sulfur atom into dethiobiotin via a radical-based mechanism. The polypeptide is Biotin synthase (Leptothrix cholodnii (strain ATCC 51168 / LMG 8142 / SP-6) (Leptothrix discophora (strain SP-6))).